A 367-amino-acid polypeptide reads, in one-letter code: Splicing factor U2AF-associated protein 2 (367 aa).

The tract at residues 36–104 (YDPNSLKMNK…SKSENSEASP (69 aa)) is disordered. Basic and acidic residues predominate over residues 61–78 (TEGKESSNGEDRHTKRLY). 2 RRM domains span residues 112 to 193 (VYIQ…KMRV) and 268 to 329 (LLID…VVEA).

The protein belongs to the HTATSF1 family. In terms of assembly, interacts with the U2AF large and U2AF small subunits.

In terms of biological role, has a role in pre-mRNA splicing. This Schizosaccharomyces pombe (strain 972 / ATCC 24843) (Fission yeast) protein is Splicing factor U2AF-associated protein 2 (uap2).